The sequence spans 1661 residues: MATNGVKAEPTKVNILGKDSIVVDYGLWQSYIAEDLLQNIPSSTYVLITDTNIGPTYTPTFERSFSAAAASIASSPRLLTYTIPPGETSKSRSTKAAVEDWLLSQGCTRDTVIIALGGGVIGDMIGYVAATYMRGIKFVNVPTTLLAMVDSSIGGKTAIDVPAGKNLVGAFWQPERIYIDLQFLETLPKREVINGMAEVVKTAAIWNEEEFTALEGNADAILAAMDQKTTDGRRNFDSIAGILKRIVLGSVRVKAEVVSADEREGGLRNLLNFGHSIGHAYEAILTPQILHGECVAIGMVKEAELARYLGVLDPSAVARLTKCIASYGLPTSLADKTVRRRSANKHCPVDELIKIMAVDKKNAGAVKKIVLLSGIGRTYEKKASSVVDRDIKIALSPSISVHPGIPSDLNVTCTPPGSKSVSNRVLVLAALGTGSCRITNLLHSDDTQVMLDALAKMQGASFSWENDGKELVVTGNGGQLKASSNELYLGNAGTAARFLTSVTALCQAQEGVTSTVVTGNARMKERPIGPLVKSLRTMGIDVDYQEKEGSLPLRISACGGFGSEAFSGEIELTANVSSQYVSSILLSAPYSKKPVTLRLVGGKVISQPYIDMTIAMMASFGVQVKRDQSDPNTYRIPNKPYTNPAEYVVESDASSATYPLAIAAITGTTCTVPNIGSGSLQGDARFAIEVLKPMGCKVEQTKTSTTVTGPPRGELKAVKEIDMEPMTDAFLTASVLAAVCSSNGTSTTTRIYGIANQRVKECNRIQAMEDELAKFGITCRQFDDGIEVDGRGYQLDAPKVGIHCYDDHRVAMSFGVLGLVAPEPVLILEKDCTGKTWPGYWDILNQQFKAELTGVEPPQQSHGKKITSKGQQKSIFIIGMRGAGKTTAGGWASRALGWPLIDLDTALEQHMSMTIPEIIKTSGWDGFRKAELELLQRTVKEKPTGHIFACGGGIVEIPEARKILVDYQKSGGIVLLVSRDINKVVEFLQIDKTRPAYVEDMMGVWLRRKPWYVECSNYRFHSQAAGSKALAHTQTEIGRFLNIITGRTSTLQDIKKKKQSFFVCLSAPNLEPCAKDLPEIVVGADAVELRVDLLEDPEGSEGLPTPEFVIEQLTILRNVTTIPVIFTLRTKAQGGKFPDEAYAEARSLYQSAIRLGCEFVDLEMTMPEEVLREVSETRGFTEIIASHHDPKGELSWTNGSWMKYYNRALQYGTVIKLVGVAKSLQDNFALAEFKSWAETAHPTPLIAINMGEHGKLSRILNGFMAPVSHPLLPSATAPGQLSAADIRRGLSLMGEIPTKKFCIFGSPISQSPSPRLHNRLFRETGLPHTYGLHETTDASSIRDIIRAPDFGGASVTIPLKQDVRPLIDGVGPEVEAIGALNTIVPEVSIDESTGKEITRLIGRNTDYLGMILILRNTGAHGVGAGLVIGGGGTSRAAIYALKEMGYGPIYLLGRNAHKIEALKSDFPSSYNLQVITSPEQVSSLDAMPTVAIGTVPADQPLDPTIRETLCAFFEKAKDVKTERGEERILLEMAYKPPVTALIQLSQDAGWKTVNGLEVLVGQGVHQFEYWTGVKPLYSVARLQLLSHHRLPRYSHLNSNYSNHSAHCSTVPAKTSILPYHRPLYTLAFVIKLHGLVAHCRTLRDAFSFSVFLTYSWSLGDW.

The segment at 1-388 (MATNGVKAEP…YEKKASSVVD (388 aa)) is 3-dehydroquinate synthase. NAD(+) contacts are provided by residues 50–52 (DTN), 87–90 (ETSK), 118–120 (GGV), and aspartate 123. 7-phospho-2-dehydro-3-deoxy-D-arabino-heptonate is bound at residue arginine 134. 143 to 144 (TT) is a binding site for NAD(+). 7-phospho-2-dehydro-3-deoxy-D-arabino-heptonate contacts are provided by aspartate 150 and lysine 156. NAD(+) is bound at residue lysine 165. Asparagine 166 is a 7-phospho-2-dehydro-3-deoxy-D-arabino-heptonate binding site. NAD(+) contacts are provided by residues 183-186 (FLET) and asparagine 194. Zn(2+) is bound at residue glutamate 198. Residues 198–201 (EVVK) and lysine 254 contribute to the 7-phospho-2-dehydro-3-deoxy-D-arabino-heptonate site. The active-site Proton acceptor; for 3-dehydroquinate synthase activity is glutamate 264. 7-phospho-2-dehydro-3-deoxy-D-arabino-heptonate is bound by residues 268 to 272 (RNLLN) and histidine 275. Histidine 275 lines the Zn(2+) pocket. Histidine 279 (proton acceptor; for 3-dehydroquinate synthase activity) is an active-site residue. Residues histidine 291 and lysine 360 each contribute to the 7-phospho-2-dehydro-3-deoxy-D-arabino-heptonate site. Position 291 (histidine 291) interacts with Zn(2+). An EPSP synthase region spans residues 401 to 850 (VHPGIPSDLN…WDILNQQFKA (450 aa)). The active-site For EPSP synthase activity is cysteine 832. Positions 872–1064 (QKSIFIIGMR…KKKKQSFFVC (193 aa)) are shikimate kinase. Position 879–886 (879–886 (GMRGAGKT)) interacts with ATP. Residues 1065-1285 (LSAPNLEPCA…TAPGQLSAAD (221 aa)) form a 3-dehydroquinase region. Residue histidine 1188 is the Proton acceptor; for 3-dehydroquinate dehydratase activity of the active site. Residue lysine 1216 is the Schiff-base intermediate with substrate; for 3-dehydroquinate dehydratase activity of the active site. A shikimate dehydrogenase region spans residues 1298–1661 (TKKFCIFGSP…LTYSWSLGDW (364 aa)).

It in the N-terminal section; belongs to the sugar phosphate cyclases superfamily. Dehydroquinate synthase family. In the 2nd section; belongs to the EPSP synthase family. The protein in the 3rd section; belongs to the shikimate kinase family. This sequence in the 4th section; belongs to the type-I 3-dehydroquinase family. It in the C-terminal section; belongs to the shikimate dehydrogenase family. Homodimer. Zn(2+) serves as cofactor.

It localises to the cytoplasm. The catalysed reaction is 7-phospho-2-dehydro-3-deoxy-D-arabino-heptonate = 3-dehydroquinate + phosphate. It carries out the reaction 3-dehydroquinate = 3-dehydroshikimate + H2O. It catalyses the reaction shikimate + NADP(+) = 3-dehydroshikimate + NADPH + H(+). The enzyme catalyses shikimate + ATP = 3-phosphoshikimate + ADP + H(+). The catalysed reaction is 3-phosphoshikimate + phosphoenolpyruvate = 5-O-(1-carboxyvinyl)-3-phosphoshikimate + phosphate. It participates in metabolic intermediate biosynthesis; chorismate biosynthesis; chorismate from D-erythrose 4-phosphate and phosphoenolpyruvate: step 2/7. The protein operates within metabolic intermediate biosynthesis; chorismate biosynthesis; chorismate from D-erythrose 4-phosphate and phosphoenolpyruvate: step 3/7. It functions in the pathway metabolic intermediate biosynthesis; chorismate biosynthesis; chorismate from D-erythrose 4-phosphate and phosphoenolpyruvate: step 4/7. Its pathway is metabolic intermediate biosynthesis; chorismate biosynthesis; chorismate from D-erythrose 4-phosphate and phosphoenolpyruvate: step 5/7. It participates in metabolic intermediate biosynthesis; chorismate biosynthesis; chorismate from D-erythrose 4-phosphate and phosphoenolpyruvate: step 6/7. In terms of biological role, the AROM polypeptide catalyzes 5 consecutive enzymatic reactions in prechorismate polyaromatic amino acid biosynthesis. The protein is Pentafunctional AROM polypeptide of Phaeosphaeria nodorum (strain SN15 / ATCC MYA-4574 / FGSC 10173) (Glume blotch fungus).